Here is a 330-residue protein sequence, read N- to C-terminus: Trans-1,2-dihydrobenzene-1,2-diol dehydrogenase (330 aa).

It belongs to the Gfo/Idh/MocA family. Homodimer.

The catalysed reaction is (1R,2R)-1,2-dihydrobenzene-1,2-diol + NADP(+) = catechol + NADPH + H(+). It carries out the reaction D-xylose + NADP(+) = D-xylono-1,5-lactone + NADPH + H(+). The chain is Trans-1,2-dihydrobenzene-1,2-diol dehydrogenase (dhdh) from Xenopus tropicalis (Western clawed frog).